A 97-amino-acid polypeptide reads, in one-letter code: Protein RnfH (97 aa).

It belongs to the UPF0125 (RnfH) family.

The protein is Protein RnfH of Proteus mirabilis (strain HI4320).